The chain runs to 509 residues: Putative thymidine phosphorylase (509 aa).

This sequence belongs to the thymidine/pyrimidine-nucleoside phosphorylase family. Type 2 subfamily.

It catalyses the reaction thymidine + phosphate = 2-deoxy-alpha-D-ribose 1-phosphate + thymine. The protein is Putative thymidine phosphorylase of Bradyrhizobium sp. (strain ORS 278).